We begin with the raw amino-acid sequence, 1076 residues long: Envelopment polyprotein (1076 aa).

An N-terminal signal peptide occupies residues 1 to 18 (MIVPIVLFLTLCPSELSA). Over 19-455 (WGSPGDPIVC…NPQCYPVKKW (437 aa)) the chain is Lumenal. 9 disulfide bridges follow: C28–C51, C145–C158, C182–C329, C208–C218, C260–C307, C289–C294, C351–C354, C358–C426, and C378–C383. A helical membrane pass occupies residues 456 to 476 (LFLVVVIMCCYCALMLLTNIL). A golgi retention signal region spans residues 477–523 (RAIGVWGTWVFAPIKLALALGLRLAKLSKKGLVAVVTRGQMIVNDEL). Topologically, residues 477–539 (RAIGVWGTWV…RGEQNEGRQG (63 aa)) are cytoplasmic. Residues 544-566 (GPIRHWLYSPALILILTTSICSG) form an internal signal sequence for glycoprotein C region. Intrachain disulfides connect C567–C608, C580–C590, C633–C729, C648–C845, C654–C702, C660–C709, C664–C691, C695–C700, C782–C797, and C813–C827. Topologically, residues 567–1040 (CDELVHAESK…ALFGDGITRW (474 aa)) are lumenal. A fusion loop region spans residues 654 to 660 (CRWAGDC). Residues 695-709 (CGGAACGCFNAAPSC) are fusion loop. N-linked (GlcNAc...) asparagine; by host glycans are attached at residues N857 and N918. 2 disulfide bridges follow: C912-C982 and C922-C925. N940 carries an N-linked (GlcNAc...) asparagine; by host glycan. Residues 1041-1061 (ILGIIGVLLACVMLFVVVVAI) traverse the membrane as a helical segment. The Cytoplasmic segment spans residues 1062 to 1076 (TRRLIKGLTQRAKVA).

This sequence belongs to the phlebovirus envelope glycoprotein family. In terms of assembly, heterodimer with glycoprotein C. As to quaternary structure, heterodimer with glycoprotein N. Homotrimer (postfusion). Specific enzymatic cleavages in vivo yield mature proteins Glycoprotein C, and Glycoprotein N. Post-translationally, glycosylated. In terms of processing, palmitoylated.

It is found in the virion membrane. Its subcellular location is the host Golgi apparatus membrane. The protein resides in the host endoplasmic reticulum membrane. Functionally, structural component of the virion that interacts with glycoprotein C. It shields the hydrophobic fusion loops of the glycoprotein C, preventing premature fusion. The glycoprotein protrusions are arranged on an icosahedral lattice, with T=12 triangulation. They are able to attach the virion to the host cell receptor CD209/DC-SIGN and to promote fusion of membranes with the late endosome after endocytosis of the virion. Plays a role in the packaging of ribonucleoproteins during virus assembly. Structural component of the virion that interacts with glycoprotein N. Acts as a class II fusion protein that is activated upon acidification and subsequent repositioning of the glycoprotein N. The glycoprotein protrusions are arranged on an icosahedral lattice, with T=12 triangulation. They are able to attach the virion to the host cell receptor CD209/DC-SIGN and to promote fusion of membranes with the late endosome after endocytosis of the virion. This Alces americanus (American moose) protein is Envelopment polyprotein (GP).